The chain runs to 276 residues: Casein kinase II subunit beta-3 (276 aa).

Disordered stretches follow at residues 1-22 (MYKE…LGGA) and 34-86 (KKLE…SEGD).

The protein belongs to the casein kinase 2 subunit beta family. As to quaternary structure, heterotetramer of two catalytic alpha subunits and two regulatory beta subunits. Interacts with CCA1. Interacts with LHY. Post-translationally, phosphorylated by alpha subunit.

Its subcellular location is the cytoplasm. The protein localises to the cytosol. It localises to the nucleus. Its function is as follows. Plays a complex role in regulating the basal catalytic activity of the alpha subunit. The tetrameric holoenzyme CK2, composed of two alpha and two beta subunits, phosphorylates the transcription factor PIF1 after an exposure to light, resulting in a proteasome-dependent degradation of PIF1 and promotion of photomorphogenesis. CK2 phosphorylates translation initiation factors. May participate in the regulation of the initiation of translation. Stimulates the binding of CCA1 to promoters. In Arabidopsis thaliana (Mouse-ear cress), this protein is Casein kinase II subunit beta-3 (CKB3).